Reading from the N-terminus, the 205-residue chain is Endoribonuclease YbeY (205 aa).

The Zn(2+) site is built by histidine 124, histidine 128, and histidine 134. Residues 162–205 (GTAPVAPGGEAQVPNEALETSGKRQDHSLGEILPGGMSRRLAGS) form a disordered region.

Belongs to the endoribonuclease YbeY family. Zn(2+) serves as cofactor.

The protein resides in the cytoplasm. Its function is as follows. Single strand-specific metallo-endoribonuclease involved in late-stage 70S ribosome quality control and in maturation of the 3' terminus of the 16S rRNA. The sequence is that of Endoribonuclease YbeY from Beijerinckia indica subsp. indica (strain ATCC 9039 / DSM 1715 / NCIMB 8712).